A 185-amino-acid polypeptide reads, in one-letter code: Ribosome-recycling factor (185 aa).

The protein belongs to the RRF family.

The protein localises to the cytoplasm. Functionally, responsible for the release of ribosomes from messenger RNA at the termination of protein biosynthesis. May increase the efficiency of translation by recycling ribosomes from one round of translation to another. This Shewanella frigidimarina (strain NCIMB 400) protein is Ribosome-recycling factor.